Here is a 237-residue protein sequence, read N- to C-terminus: Probable S-methyl-5'-thioinosine phosphorylase (237 aa).

Residues threonine 12 and 54-55 (RH) contribute to the phosphate site. Methionine 187 serves as a coordination point for substrate. Threonine 188 contacts phosphate. 211–213 (NWA) lines the substrate pocket.

This sequence belongs to the PNP/MTAP phosphorylase family. MTAP subfamily. Homotrimer.

The enzyme catalyses S-methyl-5'-thioinosine + phosphate = 5-(methylsulfanyl)-alpha-D-ribose 1-phosphate + hypoxanthine. Its pathway is purine metabolism; purine nucleoside salvage. In terms of biological role, catalyzes the reversible phosphorylation of S-methyl-5'-thioinosine (MTI) to hypoxanthine and 5-methylthioribose-1-phosphate. Involved in the breakdown of S-methyl-5'-thioadenosine (MTA), a major by-product of polyamine biosynthesis. Catabolism of (MTA) occurs via deamination to MTI and phosphorolysis to hypoxanthine. This Xylella fastidiosa (strain 9a5c) protein is Probable S-methyl-5'-thioinosine phosphorylase.